The primary structure comprises 618 residues: Structural protein ORF618 (618 aa).

Positions 570-598 (ILEAKRQIEDRAKGLSKNLDNTVTEIMNA) form a coiled coil.

Its subcellular location is the virion. The sequence is that of Structural protein ORF618 from Acidianus two-tailed virus (ATV).